A 301-amino-acid polypeptide reads, in one-letter code: Probable alpha-L-glutamate ligase (301 aa).

The ATP-grasp domain occupies L104–E287. ATP-binding positions include K141, E178–F179, D187, and R211–N213. Residues D248, E260, and N262 each contribute to the Mg(2+) site. Mn(2+)-binding residues include D248, E260, and N262.

It belongs to the RimK family. Mg(2+) is required as a cofactor. Mn(2+) serves as cofactor.

The protein is Probable alpha-L-glutamate ligase of Vibrio atlanticus (strain LGP32) (Vibrio splendidus (strain Mel32)).